Reading from the N-terminus, the 424-residue chain is GTPase Obg (424 aa).

Positions 1–158 constitute an Obg domain; that stretch reads MFVDRARIYI…LWVILELKLL (158 aa). In terms of domain architecture, OBG-type G spans 159 to 330; sequence ADVGLIGFPN…LIYYAAQKLK (172 aa). Residues 165-172, 190-194, 212-215, 282-285, and 311-313 each bind GTP; these read GFPNVGKS, FTTIN, DIPG, NKMD, and SAA. The Mg(2+) site is built by Ser172 and Thr192. Residues 347–424 form the OCT domain; the sequence is YTAVEEEPFN…MYDLEFEYFR (78 aa).

It belongs to the TRAFAC class OBG-HflX-like GTPase superfamily. OBG GTPase family. In terms of assembly, monomer. Requires Mg(2+) as cofactor.

It is found in the cytoplasm. Its function is as follows. An essential GTPase which binds GTP, GDP and possibly (p)ppGpp with moderate affinity, with high nucleotide exchange rates and a fairly low GTP hydrolysis rate. Plays a role in control of the cell cycle, stress response, ribosome biogenesis and in those bacteria that undergo differentiation, in morphogenesis control. The chain is GTPase Obg from Acetivibrio thermocellus (strain ATCC 27405 / DSM 1237 / JCM 9322 / NBRC 103400 / NCIMB 10682 / NRRL B-4536 / VPI 7372) (Clostridium thermocellum).